A 200-amino-acid chain; its full sequence is MADPRVEELPEEEVKKTQVEDLDNSSDDESDIEAGDSSLPAGSQAVIHSRNEKKARKAIEKLHLQRVPGITRVTLRRPKNILFVINNPEVYKSPNSNTYIVFGEAKIEDLNASAQAAAAQQLASQSAEHDHAGHTHEHEEAGKAKEEEEEDEGEEVDAEGIEDKDIELVMTQANVSRKKAIKALKENDNDIVNSIMALSI.

The segment covering 1-19 (MADPRVEELPEEEVKKTQV) has biased composition (basic and acidic residues). Disordered regions lie at residues 1 to 54 (MADP…NEKK) and 118 to 165 (AAQQ…EDKD). A compositionally biased stretch (acidic residues) spans 20–34 (EDLDNSSDDESDIEA). Residues 49-114 (SRNEKKARKA…AKIEDLNASA (66 aa)) form the NAC-A/B domain. Positions 127 to 146 (AEHDHAGHTHEHEEAGKAKE) are enriched in basic and acidic residues. The segment covering 147–160 (EEEEDEGEEVDAEG) has biased composition (acidic residues). A UBA domain is found at 161–200 (IEDKDIELVMTQANVSRKKAIKALKENDNDIVNSIMALSI).

This sequence belongs to the NAC-alpha family. As to quaternary structure, part of the nascent polypeptide-associated complex (NAC), consisting of npc-1/egd2 and npc-2/egd1. NAC associates with ribosomes via npc-2/egd1.

The protein resides in the cytoplasm. The protein localises to the nucleus. Its function is as follows. Component of the nascent polypeptide-associated complex (NAC), a dynamic component of the ribosomal exit tunnel, protecting the emerging polypeptides from interaction with other cytoplasmic proteins to ensure appropriate nascent protein targeting. The NAC complex also promotes mitochondrial protein import by enhancing productive ribosome interactions with the outer mitochondrial membrane and blocks the inappropriate interaction of ribosomes translating non-secretory nascent polypeptides with translocation sites in the membrane of the endoplasmic reticulum. Npc-1/egd2 may also be involved in transcription regulation. This Neurospora crassa (strain ATCC 24698 / 74-OR23-1A / CBS 708.71 / DSM 1257 / FGSC 987) protein is Nascent polypeptide-associated complex subunit alpha (npc-1).